The following is a 375-amino-acid chain: Succinyl-diaminopimelate desuccinylase (375 aa).

Histidine 66 serves as a coordination point for Zn(2+). Residue aspartate 68 is part of the active site. A Zn(2+)-binding site is contributed by aspartate 99. Glutamate 133 functions as the Proton acceptor in the catalytic mechanism. Zn(2+) is bound by residues glutamate 134, glutamate 162, and histidine 348.

This sequence belongs to the peptidase M20A family. DapE subfamily. As to quaternary structure, homodimer. Zn(2+) serves as cofactor. Co(2+) is required as a cofactor.

It carries out the reaction N-succinyl-(2S,6S)-2,6-diaminopimelate + H2O = (2S,6S)-2,6-diaminopimelate + succinate. It functions in the pathway amino-acid biosynthesis; L-lysine biosynthesis via DAP pathway; LL-2,6-diaminopimelate from (S)-tetrahydrodipicolinate (succinylase route): step 3/3. Functionally, catalyzes the hydrolysis of N-succinyl-L,L-diaminopimelic acid (SDAP), forming succinate and LL-2,6-diaminopimelate (DAP), an intermediate involved in the bacterial biosynthesis of lysine and meso-diaminopimelic acid, an essential component of bacterial cell walls. The chain is Succinyl-diaminopimelate desuccinylase from Salmonella agona (strain SL483).